We begin with the raw amino-acid sequence, 282 residues long: MQVFENITKMQEWAREQKKQGQSIALVPTMGYLHEGHLALVKEARRQCDKVVVSIFVNPIQFGAGEDFEQYPRDLEQDSALLEKERVDALFSPGIRDMYPGSFQTFVEVYGEITEKMCGASRPGHFKGVTTVVSKLFNICQPDRAYFGQKDAQQLMIVEKMVRELNFPLEIIRVPIVREKDGLAMSSRNVYLSPEERAEALVLYRALKMAEEEIKNGEREIGIIRQKMEEMIKACPRAAIDYIAINNANDLSELQTCAGKVLIALAVKFGKTRLIDNLIVEV.

Position 30–37 (30–37 (MGYLHEGH)) interacts with ATP. The Proton donor role is filled by His37. Gln61 serves as a coordination point for (R)-pantoate. Residue Gln61 coordinates beta-alanine. 148 to 151 (GQKD) is a binding site for ATP. Gln154 serves as a coordination point for (R)-pantoate. ATP is bound by residues Val177 and 185-188 (MSSR).

Belongs to the pantothenate synthetase family. Homodimer.

Its subcellular location is the cytoplasm. The catalysed reaction is (R)-pantoate + beta-alanine + ATP = (R)-pantothenate + AMP + diphosphate + H(+). The protein operates within cofactor biosynthesis; (R)-pantothenate biosynthesis; (R)-pantothenate from (R)-pantoate and beta-alanine: step 1/1. In terms of biological role, catalyzes the condensation of pantoate with beta-alanine in an ATP-dependent reaction via a pantoyl-adenylate intermediate. This is Pantothenate synthetase from Syntrophomonas wolfei subsp. wolfei (strain DSM 2245B / Goettingen).